The sequence spans 245 residues: 23S rRNA (guanosine-2'-O-)-methyltransferase RlmB (245 aa).

Positions 197, 217, and 226 each coordinate S-adenosyl-L-methionine.

This sequence belongs to the class IV-like SAM-binding methyltransferase superfamily. RNA methyltransferase TrmH family. RlmB subfamily.

The protein localises to the cytoplasm. It carries out the reaction guanosine(2251) in 23S rRNA + S-adenosyl-L-methionine = 2'-O-methylguanosine(2251) in 23S rRNA + S-adenosyl-L-homocysteine + H(+). Its function is as follows. Specifically methylates the ribose of guanosine 2251 in 23S rRNA. This Photobacterium profundum (strain SS9) protein is 23S rRNA (guanosine-2'-O-)-methyltransferase RlmB.